A 229-amino-acid chain; its full sequence is Mannose-specific lectin TAR1 (229 aa).

Residues 1-23 form the signal peptide; sequence MAKLLLFLLPAILGLLIPRSAVA. Bulb-type lectin domains lie at 26-131 and 145-229; these read TNYL…PWVP and DNLL…DYVL. Residues 51-55, Tyr59, Trp63, Gln64, 170-174, Tyr178, and 182-185 contribute to the beta-D-mannose site; these read QNDCN, QGDCN, and YGWQ. The Carbohydrate-binding motif 1 signature appears at 51–59; it reads QNDCNLVLY. Intrachain disulfides connect Cys54–Cys74 and Cys173–Cys195. Residues 170–178 carry the Carbohydrate-binding motif 2 motif; it reads QGDCNLVLY.

In terms of assembly, forms heterotetramer of 2 chains 1 and 2 chains 2 arranged as a dimer of chain 1 and chain 2 heterodimers.

The protein resides in the secreted. In terms of biological role, mannose-specific lectin. Shows agglutinating activity towards erythrocytes from rabbit. This is Mannose-specific lectin TAR1 from Colocasia esculenta (Wild taro).